A 306-amino-acid chain; its full sequence is Glutaminase (306 aa).

The substrate site is built by serine 64, asparagine 115, glutamate 159, asparagine 166, tyrosine 190, tyrosine 242, and valine 260.

This sequence belongs to the glutaminase family. Homotetramer.

The enzyme catalyses L-glutamine + H2O = L-glutamate + NH4(+). The chain is Glutaminase from Aliivibrio salmonicida (strain LFI1238) (Vibrio salmonicida (strain LFI1238)).